Reading from the N-terminus, the 108-residue chain is Nascent polypeptide-associated complex protein (108 aa).

One can recognise an NAC-A/B domain in the interval 1–68 (MNPREIRRMM…LREVKKEVEQ (68 aa)).

This sequence belongs to the NAC-alpha family. As to quaternary structure, homodimer. Interacts with the ribosome. Binds ribosomal RNA.

Its function is as follows. Contacts the emerging nascent chain on the ribosome. This is Nascent polypeptide-associated complex protein from Picrophilus torridus (strain ATCC 700027 / DSM 9790 / JCM 10055 / NBRC 100828 / KAW 2/3).